A 297-amino-acid chain; its full sequence is Probable endonuclease 4 (297 aa).

9 residues coordinate Zn(2+): His-69, His-110, Glu-145, Asp-179, His-182, His-214, Asp-227, His-229, and Glu-259.

It belongs to the AP endonuclease 2 family. Zn(2+) is required as a cofactor.

The enzyme catalyses Endonucleolytic cleavage to 5'-phosphooligonucleotide end-products.. In terms of biological role, endonuclease IV plays a role in DNA repair. It cleaves phosphodiester bonds at apurinic or apyrimidinic (AP) sites, generating a 3'-hydroxyl group and a 5'-terminal sugar phosphate. This chain is Probable endonuclease 4, found in Bacillus licheniformis (strain ATCC 14580 / DSM 13 / JCM 2505 / CCUG 7422 / NBRC 12200 / NCIMB 9375 / NCTC 10341 / NRRL NRS-1264 / Gibson 46).